We begin with the raw amino-acid sequence, 248 residues long: Small ribosomal subunit protein uS2 (248 aa).

Belongs to the universal ribosomal protein uS2 family.

The polypeptide is Small ribosomal subunit protein uS2 (Janthinobacterium sp. (strain Marseille) (Minibacterium massiliensis)).